Consider the following 137-residue polypeptide: Dormancy-associated protein homolog 3 (137 aa).

Disordered regions lie at residues 1–55 (MGLL…DSLP) and 69–137 (KPPG…TYGM). Residues 32-43 (FRPSSGNDQSEA) are compositionally biased toward polar residues. Over residues 70-87 (PPGYQGSSAPASPAGSTP) the composition is skewed to low complexity. Serine 81 is modified (phosphoserine). Residues 88–97 (PLSPFSPPLS) show a composition bias toward pro residues. Residues 104-118 (EPFRFRRRSTSDAFE) are compositionally biased toward basic and acidic residues. Residues 127–137 (GPRSSPPTYGM) are compositionally biased toward polar residues.

It belongs to the DRM1/ARP family.

This is Dormancy-associated protein homolog 3 from Arabidopsis thaliana (Mouse-ear cress).